Here is a 220-residue protein sequence, read N- to C-terminus: Urease accessory protein UreF (220 aa).

It belongs to the UreF family. As to quaternary structure, ureD, UreF and UreG form a complex that acts as a GTP-hydrolysis-dependent molecular chaperone, activating the urease apoprotein by helping to assemble the nickel containing metallocenter of UreC. The UreE protein probably delivers the nickel.

It is found in the cytoplasm. Its function is as follows. Required for maturation of urease via the functional incorporation of the urease nickel metallocenter. This is Urease accessory protein UreF from Bordetella parapertussis (strain 12822 / ATCC BAA-587 / NCTC 13253).